A 281-amino-acid polypeptide reads, in one-letter code: Cytosolic Fe-S cluster assembly factor CFD1 (281 aa).

An ATP-binding site is contributed by 24-31; that stretch reads GKGGVGKS. Residues cysteine 201 and cysteine 204 each coordinate [4Fe-4S] cluster.

Belongs to the Mrp/NBP35 ATP-binding proteins family. NUBP2/CFD1 subfamily. As to quaternary structure, heterotetramer of 2 NBP35 and 2 CFD1 chains. Requires [4Fe-4S] cluster as cofactor.

The protein localises to the cytoplasm. Functionally, component of the cytosolic iron-sulfur (Fe/S) protein assembly (CIA) machinery. Required for maturation of extramitochondrial Fe-S proteins. The NBP35-CFD1 heterotetramer forms a Fe-S scaffold complex, mediating the de novo assembly of an Fe-S cluster and its transfer to target apoproteins. Required for biogenesis and export of both ribosomal subunits, which may reflect a role in assembly of the Fe/S clusters in RLI1, a protein which performs rRNA processing and ribosome export. The protein is Cytosolic Fe-S cluster assembly factor CFD1 of Eremothecium gossypii (strain ATCC 10895 / CBS 109.51 / FGSC 9923 / NRRL Y-1056) (Yeast).